The following is a 414-amino-acid chain: Solute carrier family 25 member 46-B (414 aa).

Positions 1–13 are enriched in basic and acidic residues; the sequence is MQPRRPDRFDGLE. The interval 1–89 is disordered; the sequence is MQPRRPDRFD…AFGEENSGSS (89 aa). Over residues 29–50 the composition is skewed to polar residues; it reads YQSSFPARSLSSSGDLSQQWVT. A Solcar 1 repeat occupies 92-183; sequence QVNRFAGFGI…GMLSEFTHLP (92 aa). Helical transmembrane passes span 99-119, 159-179, 198-218, 254-274, 310-330, and 379-399; these read FGIG…CIVL, MGST…LSEF, HLLL…ASLI, LLPL…HYII, FPEL…LYPL, and LGFY…AIVL. Residues 307–412 form a Solcar 2 repeat; the sequence is EDYFPELLAN…KIIYSSVVQT (106 aa).

Belongs to the mitochondrial carrier (TC 2.A.29) family.

The protein resides in the mitochondrion outer membrane. Functionally, may play a role in mitochondrial dynamics by controlling mitochondrial membrane fission. This Xenopus laevis (African clawed frog) protein is Solute carrier family 25 member 46-B (slc25a46-b).